Consider the following 286-residue polypeptide: ATP synthase gamma chain (286 aa).

It belongs to the ATPase gamma chain family. In terms of assembly, F-type ATPases have 2 components, CF(1) - the catalytic core - and CF(0) - the membrane proton channel. CF(1) has five subunits: alpha(3), beta(3), gamma(1), delta(1), epsilon(1). CF(0) has three main subunits: a, b and c.

The protein localises to the cell inner membrane. Produces ATP from ADP in the presence of a proton gradient across the membrane. The gamma chain is believed to be important in regulating ATPase activity and the flow of protons through the CF(0) complex. The sequence is that of ATP synthase gamma chain from Shewanella halifaxensis (strain HAW-EB4).